A 657-amino-acid chain; its full sequence is MGEFKIHSKFKPMGDQPQAIDTILKSIKQGNEFQTLLGVTGSGKTFTMANIIENLQRPTLILAHNKTLAAQLCSEFKEFFPENIVEYFVSYYDYYQPEAYVPQTDTFIEKDASINDEIDKLRHSATSALFERRDVIIVASVSCIYGLGNPDEYKKLTISLRKGMQKERDEIIKKLIEIQYERNDIDFSRGTFRVRGDLLDIIPSSTSSKGIRIEFFGDEIDRIREFDVLTGTIIGERNHVSIFPASHFATSKETVERSLGEIENELENRLRELNSQEKLLEAQRLRQRTNFDIEMIREMGYCSGIENYSRILDGRAPGTPPKTLIDYFPEDFLLFIDESHVTLPQVRAMYAGDRSRKNTLVDYGFRLPCAYDNRPLKFEEFEKKINQVMFVSATPAQYELEHSQSIAEQVIRPTGLLDPEIIIKPVKGQIDDLYTEIQETISRGYRILITTLTKRMAEDLTKYMIELGVKATYMHSDIDTIERMKIIRDLRLGEYDVLVGINLLREGLDIPEVALVAILDADKEGFLRSETSLIQTIGRAARNSESKVIMYADNITKSMKKAISETERRRKIQTEYNEEHGIIPQTINKEVRELIEATKVAEESTEYGMEVTKSLTKKEAKKLIKEYTDEMKLAAKNLQFERAAQLRDKIEELKGKE.

Positions 25–182 (KSIKQGNEFQ…KKLIEIQYER (158 aa)) constitute a Helicase ATP-binding domain. ATP is bound at residue 38–45 (GVTGSGKT). Residues 91 to 114 (YYDYYQPEAYVPQTDTFIEKDASI) carry the Beta-hairpin motif. One can recognise a Helicase C-terminal domain in the interval 429-595 (QIDDLYTEIQ…TINKEVRELI (167 aa)). A UVR domain is found at 621–656 (KKLIKEYTDEMKLAAKNLQFERAAQLRDKIEELKGK).

Belongs to the UvrB family. In terms of assembly, forms a heterotetramer with UvrA during the search for lesions. Interacts with UvrC in an incision complex.

Its subcellular location is the cytoplasm. Functionally, the UvrABC repair system catalyzes the recognition and processing of DNA lesions. A damage recognition complex composed of 2 UvrA and 2 UvrB subunits scans DNA for abnormalities. Upon binding of the UvrA(2)B(2) complex to a putative damaged site, the DNA wraps around one UvrB monomer. DNA wrap is dependent on ATP binding by UvrB and probably causes local melting of the DNA helix, facilitating insertion of UvrB beta-hairpin between the DNA strands. Then UvrB probes one DNA strand for the presence of a lesion. If a lesion is found the UvrA subunits dissociate and the UvrB-DNA preincision complex is formed. This complex is subsequently bound by UvrC and the second UvrB is released. If no lesion is found, the DNA wraps around the other UvrB subunit that will check the other stand for damage. The protein is UvrABC system protein B of Clostridium botulinum (strain Eklund 17B / Type B).